We begin with the raw amino-acid sequence, 722 residues long: Protein Aster-A (722 aa).

Residues 1 to 62 form a disordered region; that stretch reads MFDTTPHSGR…KSGVSGTLST (62 aa). Low complexity predominate over residues 8–18; the sequence is SGRSSPSSSPS. The GRAM domain maps to 93–160; that stretch reads EDFRKLFSKL…KEVTCLKKEK (68 aa). Residues 256 to 336 form a disordered region; sequence ISPSGAADHS…DGPTSSLGPL (81 aa). Serine 265, serine 269, serine 273, and serine 417 each carry phosphoserine. Residues 369–540 enclose the VASt domain; sequence SGRLLINSVF…ELAKAEKLSL (172 aa). The disordered stretch occupies residues 561–600; that stretch reads LSWRGHRDGPQHPDPDPCTQTSMHTSGSLSSRFSEPSVDQ. Residues 565 to 575 show a composition bias toward basic and acidic residues; it reads GHRDGPQHPDP. Polar residues predominate over residues 578 to 594; sequence CTQTSMHTSGSLSSRFS. Residues 609–629 traverse the membrane as a helical segment; it reads ALVLISIVLIVLIALNALLFY.

Highly expressed in the brain.

Its subcellular location is the endoplasmic reticulum membrane. It is found in the cell membrane. The protein localises to the cytoplasmic vesicle. The protein resides in the autophagosome. Its function is as follows. Cholesterol transporter that mediates non-vesicular transport of cholesterol from the plasma membrane (PM) to the endoplasmic reticulum (ER). Contains unique domains for binding cholesterol and the PM, thereby serving as a molecular bridge for the transfer of cholesterol from the PM to the ER. Plays a crucial role in cholesterol homeostasis and has the unique ability to localize to the PM based on the level of membrane cholesterol. In lipid-poor conditions localizes to the ER membrane and in response to excess cholesterol in the PM is recruited to the endoplasmic reticulum-plasma membrane contact sites (EPCS) which is mediated by the GRAM domain. At the EPCS, the sterol-binding VASt/ASTER domain binds to the cholesterol in the PM and facilitates its transfer from the PM to ER. May play a role in tumor progression. Plays a role in autophagy regulation and is required for biogenesis of the autophagosome. This function in autophagy requires its cholesterol-transfer activity. This chain is Protein Aster-A, found in Mus musculus (Mouse).